An 85-amino-acid polypeptide reads, in one-letter code: MFCVIYRSAKRDQTYLYVEKKDDFSRVPEELMKSFGTPQLAMVLPLDERKKLANADIEKVKLALQEQGFYLQVPPPVENLLNTPV.

The 85-residue stretch at 1-85 (MFCVIYRSAK…PVENLLNTPV (85 aa)) folds into the YcgL domain.

The sequence is that of YcgL domain-containing protein PC1_1941 from Pectobacterium carotovorum subsp. carotovorum (strain PC1).